A 452-amino-acid chain; its full sequence is BUB3-interacting and GLEBS motif-containing protein ZNF207 (452 aa).

Residues 1–92 (MGRKKKKQLK…EGIPEKDMEE (92 aa)) are microtubule-binding region. 2 consecutive C2H2-type zinc fingers follow at residues 11–34 (PWCW…KAKH) and 35–58 (FKCH…MQVH). 2 disordered regions span residues 99-131 (QKTQ…SFQQ) and 298-330 (STMS…TSAT). A compositionally biased stretch (acidic residues) spans 113–123 (DDSDYDDDDDT). The tract at residues 329 to 361 (ATSKLVHPDEDISLEEKRAQLPKYQRNLPRPGQ) is GLEBS.

In terms of assembly, interacts (via GLEBS region) with bub3.

It is found in the nucleus. The protein localises to the chromosome. The protein resides in the centromere. Its subcellular location is the kinetochore. It localises to the cytoplasm. It is found in the cytoskeleton. The protein localises to the spindle. In terms of biological role, kinetochore- and microtubule-binding protein that plays a key role in spindle assembly. Znf207/BuGZ is mainly composed of disordered low-complexity regions and undergoes phase transition or coacervation to form temperature-dependent liquid droplets. Coacervation promotes microtubule bundling and concentrates tubulin, promoting microtubule polymerization and assembly of spindle and spindle matrix by concentrating its building blocks. This is BUB3-interacting and GLEBS motif-containing protein ZNF207 from Xenopus laevis (African clawed frog).